A 344-amino-acid chain; its full sequence is uncharacterized protein (344 aa).

At Met1–Tyr98 the chain is on the cytoplasmic side. Residues Ile99–Leu119 form a helical membrane-spanning segment. Residue His120 is a topological domain, lumenal. A helical transmembrane segment spans residues Phe121–Leu141. The Cytoplasmic segment spans residues Asn142–Lys198. The helical transmembrane segment at Tyr199–Leu219 threads the bilayer. Topologically, residues Tyr220–Asp222 are lumenal. Residues Val223–Val243 traverse the membrane as a helical segment. Residues Tyr244–Asn273 lie on the Cytoplasmic side of the membrane. A helical transmembrane segment spans residues Ala274–Gly294. At Asn295–Ile344 the chain is on the lumenal side.

This sequence belongs to the UPF0742 family.

It localises to the endoplasmic reticulum. Its subcellular location is the membrane. This is an uncharacterized protein from Schizosaccharomyces pombe (strain 972 / ATCC 24843) (Fission yeast).